We begin with the raw amino-acid sequence, 270 residues long: Ribosomal RNA small subunit methyltransferase A (270 aa).

S-adenosyl-L-methionine is bound by residues N16, L18, G43, E64, D89, and N110.

This sequence belongs to the class I-like SAM-binding methyltransferase superfamily. rRNA adenine N(6)-methyltransferase family. RsmA subfamily.

It localises to the cytoplasm. It catalyses the reaction adenosine(1518)/adenosine(1519) in 16S rRNA + 4 S-adenosyl-L-methionine = N(6)-dimethyladenosine(1518)/N(6)-dimethyladenosine(1519) in 16S rRNA + 4 S-adenosyl-L-homocysteine + 4 H(+). In terms of biological role, specifically dimethylates two adjacent adenosines (A1518 and A1519) in the loop of a conserved hairpin near the 3'-end of 16S rRNA in the 30S particle. May play a critical role in biogenesis of 30S subunits. This chain is Ribosomal RNA small subunit methyltransferase A, found in Pseudomonas fluorescens (strain ATCC BAA-477 / NRRL B-23932 / Pf-5).